A 551-amino-acid chain; its full sequence is Pyrroline-5-carboxylate reductase 1 (551 aa).

The interval 279 to 551 (LYTQKQQNKK…RHEVKTEQIN (273 aa)) is disordered. 7 stretches are compositionally biased toward low complexity: residues 282 to 298 (QKQQ…QQHQ), 306 to 342 (QQHQ…YGHQ), 383 to 415 (QQYQ…SNQR), 424 to 441 (KSPQ…QPSS), 448 to 475 (QQQQ…QQQP), 487 to 496 (QQQQPQQQQQ), and 503 to 520 (YNNN…NNYN). Basic and acidic residues predominate over residues 537 to 551 (YHDEKRHEVKTEQIN).

It belongs to the pyrroline-5-carboxylate reductase family. In terms of assembly, homodecamer; composed of 5 homodimers.

The catalysed reaction is L-proline + NADP(+) = (S)-1-pyrroline-5-carboxylate + NADPH + 2 H(+). It catalyses the reaction L-proline + NAD(+) = (S)-1-pyrroline-5-carboxylate + NADH + 2 H(+). It functions in the pathway amino-acid biosynthesis; L-proline biosynthesis; L-proline from L-glutamate 5-semialdehyde: step 1/1. This is Pyrroline-5-carboxylate reductase 1 (pycr1) from Dictyostelium discoideum (Social amoeba).